The chain runs to 416 residues: Phosphoglycerate kinase (416 aa).

Residues 24-26 (DLN), Arg-40, 63-66 (HLGR), Arg-126, and Arg-166 each bind substrate. ATP is bound by residues Lys-216, Gly-304, Glu-335, and 364–367 (GGDS).

It belongs to the phosphoglycerate kinase family. Monomer.

It is found in the cytoplasm. The enzyme catalyses (2R)-3-phosphoglycerate + ATP = (2R)-3-phospho-glyceroyl phosphate + ADP. The protein operates within carbohydrate degradation; glycolysis; pyruvate from D-glyceraldehyde 3-phosphate: step 2/5. In Mycobacterium leprae (strain Br4923), this protein is Phosphoglycerate kinase.